Reading from the N-terminus, the 393-residue chain is MAKIMIPASKQPVYKKLGLLLVAVFTVYVFFHGAQYARGSAPSPKYSTVLSSGSGYKYSKVELPKYTGPREKATFVTLVRNRDLYSLAESIKSVEDRFNSKFNYDWVFLNDEEFTDEFKNVTSALVSGTTKYGVIPKEHWSFPEWIDEEKAAQVRKEMGEKRIIYGDSISYRHMCRFESGFFYRHPLMDDYDWYWRVEPDIKLHCDIDYDVFKFMKDNKKKYAFAISIKEYEATIPTLWETTRKFMEAHPELIHENNMLDFVSDDQGLSYNLCHFWSNFEIAALDLWRSPAYSAYFDYLDREGGFFYERWGDAPVHSIGAALFLDRSEIHHFGDIGYYHVPFHSCPIDTSIRLANKCDCDPSKDFTWHSYSCTTKFYNINKLPKPAGWQNHIG.

The Cytoplasmic portion of the chain corresponds to 1–16 (MAKIMIPASKQPVYKK). Residues 17–34 (LGLLLVAVFTVYVFFHGA) form a helical; Signal-anchor for type II membrane protein membrane-spanning segment. Residues 35-68 (QYARGSAPSPKYSTVLSSGSGYKYSKVELPKYTG) are stem region. The Lumenal segment spans residues 35 to 393 (QYARGSAPSP…KPAGWQNHIG (359 aa)). The interval 69-393 (PREKATFVTL…KPAGWQNHIG (325 aa)) is catalytic. Asn-120 is a glycosylation site (N-linked (GlcNAc...) asparagine). Glu-280 functions as the Nucleophile in the catalytic mechanism.

This sequence belongs to the glycosyltransferase 15 family. Requires Mn(2+) as cofactor. In terms of processing, N-glycosylated.

It localises to the golgi apparatus membrane. The protein operates within protein modification; protein glycosylation. Functionally, mannosyltransferase that transfers a mannose residue from GDP-mannose to a range of acceptors in vitro, forming an alpha-(1-&gt;2)-D-mannosyl-D-mannose linkage. The protein is Alpha-1,2 mannosyltransferase KTR1 (KTR1) of Saccharomyces cerevisiae (strain ATCC 204508 / S288c) (Baker's yeast).